A 42-amino-acid polypeptide reads, in one-letter code: Photosystem I reaction center subunit IX (42 aa).

The chain crosses the membrane as a helical span at residues 7–27; sequence YLSTAPVLAALSLGFLAGLLI.

Belongs to the PsaJ family.

It localises to the plastid. The protein localises to the chloroplast thylakoid membrane. May help in the organization of the PsaE and PsaF subunits. In Cryptomeria japonica (Japanese cedar), this protein is Photosystem I reaction center subunit IX.